The chain runs to 149 residues: Transcriptional repressor NrdR (149 aa).

A zinc finger lies at 3–34 (CPFCSENDTKVIDSRLVADGHQVRRRRQCLAC). The ATP-cone domain maps to 49–139 (PRVIKSNGNR…VYRSFEDVRE (91 aa)).

This sequence belongs to the NrdR family. The cofactor is Zn(2+).

Negatively regulates transcription of bacterial ribonucleotide reductase nrd genes and operons by binding to NrdR-boxes. The protein is Transcriptional repressor NrdR of Vibrio cholerae serotype O1 (strain ATCC 39541 / Classical Ogawa 395 / O395).